The chain runs to 121 residues: Ribonuclease P protein component (121 aa).

Belongs to the RnpA family. Consists of a catalytic RNA component (M1 or rnpB) and a protein subunit.

It catalyses the reaction Endonucleolytic cleavage of RNA, removing 5'-extranucleotides from tRNA precursor.. Functionally, RNaseP catalyzes the removal of the 5'-leader sequence from pre-tRNA to produce the mature 5'-terminus. It can also cleave other RNA substrates such as 4.5S RNA. The protein component plays an auxiliary but essential role in vivo by binding to the 5'-leader sequence and broadening the substrate specificity of the ribozyme. The protein is Ribonuclease P protein component of Bifidobacterium adolescentis (strain ATCC 15703 / DSM 20083 / NCTC 11814 / E194a).